The following is a 67-amino-acid chain: Large ribosomal subunit protein bL35 (67 aa).

Positions 22–52 (VLAGPGKKRHNLSARSQKAKRQNRGSQVLTH) are disordered. The span at 27-44 (GKKRHNLSARSQKAKRQN) shows a compositional bias: basic residues.

The protein belongs to the bacterial ribosomal protein bL35 family.

This is Large ribosomal subunit protein bL35 from Granulibacter bethesdensis (strain ATCC BAA-1260 / CGDNIH1).